Here is a 335-residue protein sequence, read N- to C-terminus: Glyceraldehyde-3-phosphate dehydrogenase (335 aa).

Residues 10 to 11 (RI), Asp33, Lys77, and Thr119 each bind NAD(+). D-glyceraldehyde 3-phosphate-binding positions include 150 to 152 (SCT), Thr181, 210 to 211 (TG), and Arg233. Cys151 serves as the catalytic Nucleophile. An NAD(+)-binding site is contributed by Asn315.

It belongs to the glyceraldehyde-3-phosphate dehydrogenase family. As to quaternary structure, homotetramer.

It is found in the cytoplasm. The catalysed reaction is D-glyceraldehyde 3-phosphate + phosphate + NAD(+) = (2R)-3-phospho-glyceroyl phosphate + NADH + H(+). It functions in the pathway carbohydrate degradation; glycolysis; pyruvate from D-glyceraldehyde 3-phosphate: step 1/5. Its function is as follows. Catalyzes the oxidative phosphorylation of glyceraldehyde 3-phosphate (G3P) to 1,3-bisphosphoglycerate (BPG) using the cofactor NAD. The first reaction step involves the formation of a hemiacetal intermediate between G3P and a cysteine residue, and this hemiacetal intermediate is then oxidized to a thioester, with concomitant reduction of NAD to NADH. The reduced NADH is then exchanged with the second NAD, and the thioester is attacked by a nucleophilic inorganic phosphate to produce BPG. This chain is Glyceraldehyde-3-phosphate dehydrogenase (gap), found in Chlamydia muridarum (strain MoPn / Nigg).